We begin with the raw amino-acid sequence, 225 residues long: UPF0758 protein Sbal223_0402 (225 aa).

Residues 102–224 (VLTNPDLTRD…IVSFAERGWI (123 aa)) enclose the MPN domain. Zn(2+) is bound by residues histidine 173, histidine 175, and aspartate 186. A JAMM motif motif is present at residues 173–186 (HNHPSGIAEPSQAD).

It belongs to the UPF0758 family.

The chain is UPF0758 protein Sbal223_0402 from Shewanella baltica (strain OS223).